We begin with the raw amino-acid sequence, 223 residues long: Guanylate kinase (223 aa).

Positions 1–22 (MTADGGPDVRHGTRPEPSGDGR) are disordered. Residues 7–19 (PDVRHGTRPEPSG) show a composition bias toward basic and acidic residues. In terms of domain architecture, Guanylate kinase-like spans 21–201 (GRVVVLSGPS…ACAELVSLLV (181 aa)). Residue 28-35 (GPSAVGKS) participates in ATP binding. The disordered stretch occupies residues 204-223 (APDRHDTSGRTGRQTTSHPD). Positions 212 to 223 (GRTGRQTTSHPD) are enriched in polar residues.

Belongs to the guanylate kinase family.

It is found in the cytoplasm. It catalyses the reaction GMP + ATP = GDP + ADP. Essential for recycling GMP and indirectly, cGMP. In Mycolicibacterium paratuberculosis (strain ATCC BAA-968 / K-10) (Mycobacterium paratuberculosis), this protein is Guanylate kinase.